The primary structure comprises 358 residues: Neuronal-specific septin-3 (358 aa).

Basic and acidic residues predominate over residues 1 to 10; that stretch reads MSKGLPEART. Positions 1–29 are disordered; that stretch reads MSKGLPEARTDTAMSELVPEPRPKPAVPM. The region spanning 58 to 331 is the Septin-type G domain; sequence TGFDFNIMVV…ETYRAKRLND (274 aa). The interval 68–75 is G1 motif; the sequence is GQSGLGKS. GTP is bound at residue 68-75; that stretch reads GQSGLGKS. Phosphoserine is present on Ser91. Thr102 is a GTP binding site. The segment at 125–128 is G3 motif; it reads DTPG. Residues 207-210 are G4 motif; the sequence is AKAD. Residues 208–216, Gly265, and Arg280 contribute to the GTP site; that span reads KADTMTLEE.

Belongs to the TRAFAC class TrmE-Era-EngA-EngB-Septin-like GTPase superfamily. Septin GTPase family. In terms of assembly, septins polymerize into heterooligomeric protein complexes that form filaments, and can associate with cellular membranes, actin filaments and microtubules. GTPase activity is required for filament formation. In terms of processing, phosphorylated by PKG on serine residues. Phosphorylated by PKG on Ser-91. Brain-specific, with highest expression in the hippocampal CA3 region (at protein level).

The protein resides in the cytoplasm. It is found in the cytoskeleton. It localises to the synapse. Filament-forming cytoskeletal GTPase. May play a role in cytokinesis (Potential). The chain is Neuronal-specific septin-3 from Rattus norvegicus (Rat).